A 284-amino-acid chain; its full sequence is Acetylglutamate kinase (284 aa).

Substrate contacts are provided by residues 64–65, arginine 86, and asparagine 179; that span reads GG.

The protein belongs to the acetylglutamate kinase family. ArgB subfamily.

Its subcellular location is the cytoplasm. It catalyses the reaction N-acetyl-L-glutamate + ATP = N-acetyl-L-glutamyl 5-phosphate + ADP. Its pathway is amino-acid biosynthesis; L-arginine biosynthesis; N(2)-acetyl-L-ornithine from L-glutamate: step 2/4. Functionally, catalyzes the ATP-dependent phosphorylation of N-acetyl-L-glutamate. The polypeptide is Acetylglutamate kinase (Prochlorococcus marinus subsp. pastoris (strain CCMP1986 / NIES-2087 / MED4)).